The sequence spans 1556 residues: Ubiquitin carboxyl-terminal hydrolase 47 (1556 aa).

The tract at residues 117 to 231 (MKSDGEKAKS…AKKTAKVTSK (115 aa)) is disordered. A compositionally biased stretch (low complexity) spans 146-156 (ASGSSSPSKAK). Serine 172 and serine 173 each carry phosphoserine. A compositionally biased stretch (low complexity) spans 180–189 (IKTTAAKISK). Residues 191–200 (GSEKAPRASP) are compositionally biased toward basic and acidic residues. The span at 208–219 (TEINSKNTSSES) shows a compositional bias: polar residues. Residue serine 238 is modified to Phosphoserine. Positions 396–779 (VGLVNQAMTC…NAYMLMYRQV (384 aa)) constitute a USP domain. Catalysis depends on cysteine 405, which acts as the Nucleophile. 2 stretches are compositionally biased toward polar residues: residues 628–642 (NRSGNSGEQNSQLNG) and 661–673 (LSSGVVTTASSSQ). A disordered region spans residues 628–697 (NRSGNSGEQN…SSSTSKSAKQ (70 aa)). A compositionally biased stretch (low complexity) spans 688-697 (SSSTSKSAKQ). The active-site Proton acceptor is histidine 720. The segment at 1087–1148 (EPMSQPSPSH…LSSPEDEAAS (62 aa)) is disordered. A compositionally biased stretch (basic and acidic residues) spans 1109–1125 (DGDRTLVETDNMAHRGG). Residues 1128–1141 (SQVSSTSHSPQLSS) are compositionally biased toward low complexity. Residues serine 1131, serine 1132, serine 1140, serine 1141, serine 1199, serine 1201, and serine 1205 each carry the phosphoserine modification.

It belongs to the peptidase C19 family. Interacts with ttk.

Its subcellular location is the nucleus. The catalysed reaction is Thiol-dependent hydrolysis of ester, thioester, amide, peptide and isopeptide bonds formed by the C-terminal Gly of ubiquitin (a 76-residue protein attached to proteins as an intracellular targeting signal).. Functionally, ubiquitin-specific protease that deubiquitinates target proteins to regulate different cellular and developmental pathways. Functions downstream of Dsor1/MEK to positively regulate the Ras/MAPK signaling pathway. Likely to modulate the pathway during various cellular and developmental processes including rl/MAPK activation by the receptors InR, Egfr and sevenless/sev. Functions in the post-translational stabilization of rl/MAPK levels in a mechanism that is independent of rl activity and opposes the activity of the E2 enzyme Unc6 and the putative E3 ligases poe, Ufd4 and Kcmf1, which mediate the ubiquitination and proteasomal degradation of rl. During eye development it may also act downstream of rl/MAPK to negatively regulate the Ras/MAPK signaling pathway by stabilizing the transcriptional repressor ttk and consequently inhibiting photoreceptor cell development. This suggests that at least during eye development, it may act in both the positive and negative regulation of the Ras/MAPK signaling pathway to mediate the development of different cell types. Positively regulates border follicle cell migration during oogenesis by mediating the deubiquitination and stabilization of slbo. In the wing disks it positively regulates wg signaling by stabilizing arm. Has an effect on position-effect variegation. The polypeptide is Ubiquitin carboxyl-terminal hydrolase 47 (Drosophila melanogaster (Fruit fly)).